A 279-amino-acid chain; its full sequence is NADPH-dependent 7-cyano-7-deazaguanine reductase (279 aa).

86–88 (VES) provides a ligand contact to substrate. Residue 88–89 (SK) coordinates NADPH. Cysteine 187 (thioimide intermediate) is an active-site residue. Aspartate 194 serves as the catalytic Proton donor. 226 to 227 (HE) is a substrate binding site. Residue 255 to 256 (RG) participates in NADPH binding.

The protein belongs to the GTP cyclohydrolase I family. QueF type 2 subfamily. In terms of assembly, homodimer.

The protein resides in the cytoplasm. The enzyme catalyses 7-aminomethyl-7-carbaguanine + 2 NADP(+) = 7-cyano-7-deazaguanine + 2 NADPH + 3 H(+). The protein operates within tRNA modification; tRNA-queuosine biosynthesis. In terms of biological role, catalyzes the NADPH-dependent reduction of 7-cyano-7-deazaguanine (preQ0) to 7-aminomethyl-7-deazaguanine (preQ1). This chain is NADPH-dependent 7-cyano-7-deazaguanine reductase, found in Actinobacillus succinogenes (strain ATCC 55618 / DSM 22257 / CCUG 43843 / 130Z).